Reading from the N-terminus, the 345-residue chain is UPF0324 membrane protein Cgl0015/cg0018 (345 aa).

The next 10 membrane-spanning stretches (helical) occupy residues 15–37 (LRTG…VLIA), 44–66 (FSGV…LIQL), 81–103 (LLRL…SLGF), 105–124 (MLAV…ILMG), 134–156 (VLLI…EGVT), 163–185 (VVTA…PFAT), 205–227 (EIAQ…AVVV), 261–280 (VVPL…STVA), 285–307 (VIAA…LGCG), and 320–342 (PFIL…TLLT).

It belongs to the UPF0324 family.

It is found in the cell membrane. This Corynebacterium glutamicum (strain ATCC 13032 / DSM 20300 / JCM 1318 / BCRC 11384 / CCUG 27702 / LMG 3730 / NBRC 12168 / NCIMB 10025 / NRRL B-2784 / 534) protein is UPF0324 membrane protein Cgl0015/cg0018.